The following is a 145-amino-acid chain: Large-conductance mechanosensitive channel (145 aa).

The next 3 helical transmembrane spans lie at 14–34 (VMDL…VKSL), 38–58 (LIMP…YFLP), and 81–101 (GSFL…FLMV).

It belongs to the MscL family. Homopentamer.

It localises to the cell inner membrane. Its function is as follows. Channel that opens in response to stretch forces in the membrane lipid bilayer. May participate in the regulation of osmotic pressure changes within the cell. In Rhizobium etli (strain CIAT 652), this protein is Large-conductance mechanosensitive channel.